Consider the following 233-residue polypeptide: Putative N-acetylmannosamine-6-phosphate 2-epimerase (233 aa).

This sequence belongs to the NanE family.

The enzyme catalyses an N-acyl-D-glucosamine 6-phosphate = an N-acyl-D-mannosamine 6-phosphate. It participates in amino-sugar metabolism; N-acetylneuraminate degradation; D-fructose 6-phosphate from N-acetylneuraminate: step 3/5. In terms of biological role, converts N-acetylmannosamine-6-phosphate (ManNAc-6-P) to N-acetylglucosamine-6-phosphate (GlcNAc-6-P). The polypeptide is Putative N-acetylmannosamine-6-phosphate 2-epimerase (Yersinia pseudotuberculosis serotype O:1b (strain IP 31758)).